We begin with the raw amino-acid sequence, 336 residues long: Sex determination protein tasselseed-2 (336 aa).

59–83 (IVTGGARGIGEAIVRLFAKHGARVV) is an NAD(+) binding site. Position 194 (Ser194) interacts with substrate. Tyr207 serves as the catalytic Proton acceptor.

It belongs to the short-chain dehydrogenases/reductases (SDR) family.

Its function is as follows. Required for stage-specific floral organ abortion. The chain is Sex determination protein tasselseed-2 (TS2) from Zea mays (Maize).